A 339-amino-acid polypeptide reads, in one-letter code: Tetracenomycin polyketide synthesis 8-O-methyl transferase TcmO (339 aa).

S-adenosyl-L-methionine is bound by residues D200 and 226–228 (GDF). Catalysis depends on H246, which acts as the Proton acceptor.

The protein belongs to the class I-like SAM-binding methyltransferase superfamily. Cation-independent O-methyltransferase family.

Its pathway is antibiotic biosynthesis; tetracenomycin C biosynthesis. This is Tetracenomycin polyketide synthesis 8-O-methyl transferase TcmO (tcmO) from Streptomyces glaucescens.